A 362-amino-acid polypeptide reads, in one-letter code: Adenosine kinase (362 aa).

Residue Ala-2 is modified to N-acetylalanine. A Nuclear localization signal motif is present at residues 8–16; that stretch reads PKPKKLKVE. Adenosine is bound at residue Asp-35. Residue Ser-49 coordinates Mg(2+). Residue Tyr-77 is modified to Phosphotyrosine. Residues Asp-147 and Asn-148 each coordinate Mg(2+). Gln-306 serves as a coordination point for adenosine. Asp-317 functions as the Proton acceptor in the catalytic mechanism.

Belongs to the carbohydrate kinase PfkB family. Monomer. Mg(2+) is required as a cofactor. As to expression, widely expressed. Highest level in placenta, liver, muscle and kidney.

Its subcellular location is the nucleus. It is found in the cytoplasm. The catalysed reaction is adenosine + ATP = AMP + ADP + H(+). Its pathway is purine metabolism; AMP biosynthesis via salvage pathway; AMP from adenosine: step 1/1. Activity is inhibited by 5-iodotubercidin and 5'-amino-5'-deoxyadenosine. Functionally, catalyzes the phosphorylation of the purine nucleoside adenosine at the 5' position in an ATP-dependent manner. Serves as a potential regulator of concentrations of extracellular adenosine and intracellular adenine nucleotides. This chain is Adenosine kinase, found in Homo sapiens (Human).